Consider the following 770-residue polypeptide: MTLAKIELLKQLLRDNEAKTVLKQTTVDQYNIIRKFNTSRIERNPSLRMKWAMCSNFPLALTKGDMANRIPLEYKGIQLKTNAEDIGTKGQMCSIAAVTWWNTYGPIGDTEGFEKVYESFFLRKMRLDNATWGRITFGPVERVRKRVLLNPLTKEMPPDEASNVIMEILFPKEAGIPRESTWIHRELIKEKREKLKGTMITPIVLAYMLERELVARRRFLPVAGATSAEFIEMLHCLQGENWRQIYHPGGNKLTESRSQSMIVACRKIIRRSIVASNPLELAVEIANKTVIDTEPLKSCLAAIDGGDVACDIIRAALGLKIRQRQRFGRLELKRISGRGFKNDEEILIGNGTIQKIGIWDGEEEFHVRCGECRGILKKSKMRMEKLLINSAKKEDMKDLIILCMVFSQDTRMFQGVRGEINFLNRAGQLLSPMYQLQRYFLNRSNDLFDQWGYEEPPKASELHGINELMNASDYTLKGVVVTKNVIDDFSSTETEKVSITKNLSLIKRTGEVIMGANDVSELESQAQLMITYDTPKMWEMGTTKELVQNTYQWVLKNLVTLKAQFLLGKEDMFQWDAFEAFESIIPQKMAGQYSGFARAVLKQMRDQEVMKTDQFIKLLPFCFSPPKLRRNGEPYQFLRLMLKGGGENFIEVRKGSPLFSYNPQTEVLTICGRMMSLKGKIEDEERNRSMGNAVLAGFLVSGKYDPDLGDFKTIEELEKLKPGEKANILLYQGKPVKVVKRKRYSALSNDISQGIKRQRMTVESMGWALS.

Residues 740-743 (KRKR) carry the Nuclear localization signal motif.

It belongs to the influenza viruses PB2 family. Influenza RNA polymerase is composed of three subunits: PB1, PB2 and PA. Interacts (via N-terminus) with PB1 (via C-terminus). Interacts with nucleoprotein NP (via N-terminus).

Its subcellular location is the virion. The protein localises to the host nucleus. Plays an essential role in transcription initiation and cap-stealing mechanism, in which cellular capped pre-mRNAs are used to generate primers for viral transcription. Recognizes and binds a wide range of cap structures of target pre-RNAs which are subsequently cleaved after 10-13 nucleotides by the viral protein PA. Plays a role in the initiation of the viral genome replication and modulates the activity of the ribonucleoprotein (RNP) complex. This Homo sapiens (Human) protein is Polymerase basic protein 2.